The primary structure comprises 400 residues: CCA-adding enzyme (400 aa).

ATP contacts are provided by G28 and R31. CTP-binding residues include G28 and R31. Mg(2+)-binding residues include D41 and D43. 5 residues coordinate ATP: R112, D155, R158, R161, and R164. 5 residues coordinate CTP: R112, D155, R158, R161, and R164.

This sequence belongs to the tRNA nucleotidyltransferase/poly(A) polymerase family. Bacterial CCA-adding enzyme type 3 subfamily. In terms of assembly, homodimer. Mg(2+) is required as a cofactor.

The catalysed reaction is a tRNA precursor + 2 CTP + ATP = a tRNA with a 3' CCA end + 3 diphosphate. It carries out the reaction a tRNA with a 3' CCA end + 2 CTP + ATP = a tRNA with a 3' CCACCA end + 3 diphosphate. Functionally, catalyzes the addition and repair of the essential 3'-terminal CCA sequence in tRNAs without using a nucleic acid template. Adds these three nucleotides in the order of C, C, and A to the tRNA nucleotide-73, using CTP and ATP as substrates and producing inorganic pyrophosphate. tRNA 3'-terminal CCA addition is required both for tRNA processing and repair. Also involved in tRNA surveillance by mediating tandem CCA addition to generate a CCACCA at the 3' terminus of unstable tRNAs. While stable tRNAs receive only 3'-terminal CCA, unstable tRNAs are marked with CCACCA and rapidly degraded. The chain is CCA-adding enzyme from Staphylococcus aureus (strain MSSA476).